A 1578-amino-acid chain; its full sequence is MTGPTKISILGQESIVADFGLWRNYVAKDLISGCPSTTYVLITDTNIGSIYTPGFQKSFEEAAASVSPSPRLLIYNAPPGEVSKSRQTKADIEDWMLSQSPPCGRDTVVIALGGGVIGDLTGFVAATYMRGVRFVQVPTTLLAMVDSSIGGKTAIDTPLGKNLIGAIWQPSRIYIDLEFLETLPVREFINGMAEVIKTAAISSEEEFTALEDNAETILSAVRREVKPGQRRFEGIEEILKARILASARHKAFVVSADEREGGLRNLLNWGHSIGHAIEAILTPQILHGECVAIGMVKEAELARHLGILKGVAVARIVKCIAAYGLPTSLKDSRIRKLTAGKHCSVDQILFNMALDKKNDGPKKKIVLLSAIGRTYEPRASVVPNEDIGVVLAPSIEVYPGVSPASEVVCAPPGSKSISNRALVLAALGSGTVRIKNLLHSDDTEVMLNALERLGAATFSWEEEGEVLVVNGKGGALQAHPSPLYLGNAGTASRFLTTVATLATASSVDSSVLTGNNRMKQRPIGDLVDALTANGAQIEYVENKGSLPLKIAASGGFTGGQINLAAKVSSQYVSSLLMCAPYAKEPVTLKLVGGKPISQPYIDMTTAMMRSFGIDVKKSTTEEHTYHIPQGRYINPAEYVVESDASSATYPLAIAAVTGTTCTIPNIGSKSLQGDARFAVDVLRPMGCTVEQTDTSTTVTGPADGVLRPLPNVDMEPMTDAFLGASVLAAIARGKDSNHTTRIYGIANQRVKECNRIKAMHDELAKFGVVCREHDDGLEIDGIDRSTLRQPAGGVFCYDDHRVAFSFSVLSLVAPKPTLILEKECVGKTWPGWWDTLRQKFAVKLEGKELKEAESPVLTRAEKASASVFIIGMRGAGKTTSGNWVASTLKRPFIDLDDELERIEGMTIPDIIKQRGWQGFRDAELSLLQRTMKERPTGHVFACGGGVVEIPEARKLLIDWHKTKGNVLLIMRDIKQVMAFLNIDKTRPAYVEDMLGVWLRRKPWFQECSNIQYYSQHASAGLPRASEDFARFIKFVTGLEDSLSTIKKKQHSFFVSLTLPDVRGADQILEQACVGSDAVELRVDLLEDPDSANGIPTVDFVADQISYLRSRITLPVIFTIRTKGQGGRFPDDAHAEAMQLYRLAVRSGCEFVDLEIAFPDEMLRAVTEMKGYSKIITSHHDPKGELSWANMSWMKYYNRALEYGDVIKLVGVARNLDDNTALRKFKNWAEEAHDVPLIAINMGGNGQLSRILNGFMTPVSHPALPFRAAPGQLSATDIRKGLSLMGEIKKKRFALFGSPISESRSPALHNTLFAEMGLPHEYTRLETANVEDVKDFIRAPDFGGASVTIPLKLDIMPLLDEITAEAEIIGAVNTVVPVSDGEGKPQRLVGHNTDWQGMVQCLRNAGAYGADGNASGLVVGGGGTSRAAIYALHHMGFSPIYIVGRNPAKLESMVATFPTGYNIRIVEGNEKLEHVPHVAIGTIPADRPIDPGMREILCHMFERAQEADADAARTIEGSPRVLLEMAYKPRVTALMQLAVDAGWTTVPGLEALIGQGVHQFQHWTGIRPLYERARAIVLG.

The interval 1–384 is 3-dehydroquinate synthase; the sequence is MTGPTKISIL…YEPRASVVPN (384 aa). Residues 44 to 46, 81 to 84, 114 to 116, and Asp-119 contribute to the NAD(+) site; these read DTN, EVSK, and GGV. Arg-130 contacts 7-phospho-2-dehydro-3-deoxy-D-arabino-heptonate. 139–140 contributes to the NAD(+) binding site; sequence TT. Asp-146 and Lys-152 together coordinate 7-phospho-2-dehydro-3-deoxy-D-arabino-heptonate. Lys-161 contacts NAD(+). Residue Asn-162 participates in 7-phospho-2-dehydro-3-deoxy-D-arabino-heptonate binding. NAD(+) contacts are provided by residues 179-182 and Asn-190; that span reads FLET. Glu-194 contacts Zn(2+). Residues 194 to 197 and Lys-250 each bind 7-phospho-2-dehydro-3-deoxy-D-arabino-heptonate; that span reads EVIK. Glu-260 serves as the catalytic Proton acceptor; for 3-dehydroquinate synthase activity. Residues 264–268 and His-271 each bind 7-phospho-2-dehydro-3-deoxy-D-arabino-heptonate; that span reads RNLLN. Position 271 (His-271) interacts with Zn(2+). His-275 serves as the catalytic Proton acceptor; for 3-dehydroquinate synthase activity. 7-phospho-2-dehydro-3-deoxy-D-arabino-heptonate-binding residues include His-287 and Lys-356. Position 287 (His-287) interacts with Zn(2+). The EPSP synthase stretch occupies residues 397 to 842; it reads VYPGVSPASE…WDTLRQKFAV (446 aa). Residue Cys-824 is the For EPSP synthase activity of the active site. The segment at 864 to 1055 is shikimate kinase; sequence SASVFIIGMR…KKKQHSFFVS (192 aa). 871–878 lines the ATP pocket; it reads GMRGAGKT. The segment at 1056–1276 is 3-dehydroquinase; that stretch reads LTLPDVRGAD…AAPGQLSATD (221 aa). The Proton acceptor; for 3-dehydroquinate dehydratase activity role is filled by His-1179. Residue Lys-1207 is the Schiff-base intermediate with substrate; for 3-dehydroquinate dehydratase activity of the active site. The interval 1289 to 1578 is shikimate dehydrogenase; the sequence is KKRFALFGSP…YERARAIVLG (290 aa).

The protein in the N-terminal section; belongs to the sugar phosphate cyclases superfamily. Dehydroquinate synthase family. In the 2nd section; belongs to the EPSP synthase family. It in the 3rd section; belongs to the shikimate kinase family. This sequence in the 4th section; belongs to the type-I 3-dehydroquinase family. The protein in the C-terminal section; belongs to the shikimate dehydrogenase family. As to quaternary structure, homodimer. It depends on Zn(2+) as a cofactor.

It localises to the cytoplasm. It carries out the reaction 7-phospho-2-dehydro-3-deoxy-D-arabino-heptonate = 3-dehydroquinate + phosphate. The enzyme catalyses 3-dehydroquinate = 3-dehydroshikimate + H2O. The catalysed reaction is shikimate + NADP(+) = 3-dehydroshikimate + NADPH + H(+). It catalyses the reaction shikimate + ATP = 3-phosphoshikimate + ADP + H(+). It carries out the reaction 3-phosphoshikimate + phosphoenolpyruvate = 5-O-(1-carboxyvinyl)-3-phosphoshikimate + phosphate. It participates in metabolic intermediate biosynthesis; chorismate biosynthesis; chorismate from D-erythrose 4-phosphate and phosphoenolpyruvate: step 2/7. Its pathway is metabolic intermediate biosynthesis; chorismate biosynthesis; chorismate from D-erythrose 4-phosphate and phosphoenolpyruvate: step 3/7. It functions in the pathway metabolic intermediate biosynthesis; chorismate biosynthesis; chorismate from D-erythrose 4-phosphate and phosphoenolpyruvate: step 4/7. The protein operates within metabolic intermediate biosynthesis; chorismate biosynthesis; chorismate from D-erythrose 4-phosphate and phosphoenolpyruvate: step 5/7. It participates in metabolic intermediate biosynthesis; chorismate biosynthesis; chorismate from D-erythrose 4-phosphate and phosphoenolpyruvate: step 6/7. Functionally, the AROM polypeptide catalyzes 5 consecutive enzymatic reactions in prechorismate polyaromatic amino acid biosynthesis. This is Pentafunctional AROM polypeptide from Neosartorya fischeri (strain ATCC 1020 / DSM 3700 / CBS 544.65 / FGSC A1164 / JCM 1740 / NRRL 181 / WB 181) (Aspergillus fischerianus).